A 249-amino-acid polypeptide reads, in one-letter code: Chitooligosaccharide deacetylase (249 aa).

Mg(2+)-binding residues include H61 and H125.

The protein belongs to the YdjC deacetylase family. ChbG subfamily. As to quaternary structure, homodimer. Mg(2+) is required as a cofactor.

It is found in the cytoplasm. It carries out the reaction N,N'-diacetylchitobiose + H2O = N-acetyl-beta-D-glucosaminyl-(1-&gt;4)-D-glucosamine + acetate. The catalysed reaction is diacetylchitobiose-6'-phosphate + H2O = N'-monoacetylchitobiose-6'-phosphate + acetate. The protein operates within glycan degradation; chitin degradation. Involved in the degradation of chitin. ChbG is essential for growth on the acetylated chitooligosaccharides chitobiose and chitotriose but is dispensable for growth on cellobiose and chitosan dimer, the deacetylated form of chitobiose. Deacetylation of chitobiose-6-P and chitotriose-6-P is necessary for both the activation of the chb promoter by the regulatory protein ChbR and the hydrolysis of phosphorylated beta-glucosides by the phospho-beta-glucosidase ChbF. Catalyzes the removal of only one acetyl group from chitobiose-6-P to yield monoacetylchitobiose-6-P, the inducer of ChbR and the substrate of ChbF. The sequence is that of Chitooligosaccharide deacetylase from Escherichia coli (strain K12 / MC4100 / BW2952).